A 123-amino-acid chain; its full sequence is Ribosome-binding factor A (123 aa).

It belongs to the RbfA family. As to quaternary structure, monomer. Binds 30S ribosomal subunits, but not 50S ribosomal subunits or 70S ribosomes.

The protein localises to the cytoplasm. In terms of biological role, one of several proteins that assist in the late maturation steps of the functional core of the 30S ribosomal subunit. Associates with free 30S ribosomal subunits (but not with 30S subunits that are part of 70S ribosomes or polysomes). Required for efficient processing of 16S rRNA. May interact with the 5'-terminal helix region of 16S rRNA. In Neisseria meningitidis serogroup C (strain 053442), this protein is Ribosome-binding factor A.